A 408-amino-acid chain; its full sequence is Digeranylgeranylglycerophospholipid reductase 1 (408 aa).

Residues alanine 15, glutamate 34, cysteine 45, alanine 46, glycine 48, arginine 99, valine 123, aspartate 279, glycine 291, and isoleucine 292 each coordinate FAD.

This sequence belongs to the geranylgeranyl reductase family. DGGGPL reductase subfamily. The cofactor is FAD.

It carries out the reaction a 2,3-bis-O-phytanyl-sn-glycerol 1-phospholipid + 8 oxidized 2[4Fe-4S]-[ferredoxin] = a 2,3-bis-O-(geranylgeranyl)-sn-glycerol 1-phospholipid + 8 reduced 2[4Fe-4S]-[ferredoxin] + 16 H(+). The catalysed reaction is 2,3-bis-O-(phytanyl)-sn-glycerol 1-phosphate + 8 oxidized 2[4Fe-4S]-[ferredoxin] = 2,3-bis-O-(geranylgeranyl)-sn-glycerol 1-phosphate + 8 reduced 2[4Fe-4S]-[ferredoxin] + 16 H(+). It catalyses the reaction a 2,3-bis-O-phytanyl-sn-glycerol 1-phospholipid + 8 A = a 2,3-bis-O-(geranylgeranyl)-sn-glycerol 1-phospholipid + 8 AH2. The enzyme catalyses CDP-2,3-bis-O-(geranylgeranyl)-sn-glycerol + 8 AH2 = CDP-2,3-bis-O-(phytanyl)-sn-glycerol + 8 A. It carries out the reaction archaetidylserine + 8 AH2 = 2,3-bis-O-phytanyl-sn-glycero-3-phospho-L-serine + 8 A. It participates in membrane lipid metabolism; glycerophospholipid metabolism. Its function is as follows. Is involved in the reduction of 2,3-digeranylgeranylglycerophospholipids (unsaturated archaeols) into 2,3-diphytanylglycerophospholipids (saturated archaeols) in the biosynthesis of archaeal membrane lipids. Catalyzes the formation of archaetidic acid (2,3-di-O-phytanyl-sn-glyceryl phosphate) from 2,3-di-O-geranylgeranylglyceryl phosphate (DGGGP) via the hydrogenation of each double bond of the isoprenoid chains. Is also probably able to reduce double bonds of geranyl groups in CDP-2,3-bis-O-(geranylgeranyl)-sn-glycerol and archaetidylserine, thus acting at various stages in the biosynthesis of archaeal membrane lipids. The sequence is that of Digeranylgeranylglycerophospholipid reductase 1 from Methanococcoides burtonii (strain DSM 6242 / NBRC 107633 / OCM 468 / ACE-M).